A 412-amino-acid polypeptide reads, in one-letter code: Putative odorant receptor 85d (412 aa).

Residues 1–56 (MLTKKDTQSAKEQEKLKAIPLHSFLKYANVFYLSIGMMAYDHKYSQKWKEVLLHWT) lie on the Cytoplasmic side of the membrane. A helical transmembrane segment spans residues 57 to 77 (FIAQMVNLNTVLISELIYVFL). The Extracellular portion of the chain corresponds to 78-84 (AIGKGSN). The chain crosses the membrane as a helical span at residues 85-105 (FLEATMNLSFIGFVIVGDFKI). The Cytoplasmic segment spans residues 106–152 (WNISRQRKRLTQVVSRLEELHPQGLAQQEPYNIGHHLSGYSRYSKFY). A helical transmembrane segment spans residues 153 to 173 (FGMHMVLIWTYNLYWAVYYLV). Over 174–219 (CDFWLGMRQFERMLPYYCWVPWDWSTGYSYYFMYISQNIGGQACLS) the chain is Extracellular. Residues 220–240 (GQLAADMLMCALVTLVVMHFI) form a helical membrane-spanning segment. Topologically, residues 241 to 282 (RLSAHIESHVAGIGSFQHDLEFLQATVAYHQSLIHLCQDINE) are cytoplasmic. Residues 283–303 (IFGVSLLSNFVSSSFIICFVG) form a helical membrane-spanning segment. At 304–314 (FQMTIGSKIDN) the chain is on the extracellular side. Residues 315 to 335 (LVMLVLFLFCAMVQVFMIATH) traverse the membrane as a helical segment. Over 336–382 (AQRLVDASEQIGQAVYNHDWFRADLRYRKMLILIIKRAQQPSRLKAT) the chain is Cytoplasmic. Residues 383 to 403 (MFLNISLVTVSDLLQLSYKFF) form a helical membrane-spanning segment. The Extracellular portion of the chain corresponds to 404–412 (ALLRTMYVN).

The protein belongs to the insect chemoreceptor superfamily. Heteromeric odorant receptor channel (TC 1.A.69) family. Or49a subfamily. In terms of assembly, interacts with Orco. Complexes exist early in the endomembrane system in olfactory sensory neurons (OSNs), coupling these complexes to the conserved ciliary trafficking pathway. Expressed in olfactory sensory neurons in the maxillary palp.

It is found in the cell membrane. Functionally, odorant receptor which mediates acceptance or avoidance behavior, depending on its substrates. The odorant receptor repertoire encodes a large collection of odor stimuli that vary widely in identity, intensity, and duration. May form a complex with Orco to form odorant-sensing units, providing sensitive and prolonged odorant signaling and calcium permeability. The polypeptide is Putative odorant receptor 85d (Or85d) (Drosophila melanogaster (Fruit fly)).